Here is an 83-residue protein sequence, read N- to C-terminus: Protein CASPARIAN STRIP INTEGRITY FACTOR 1 (83 aa).

The signal sequence occupies residues 1-22; the sequence is MGMSPLTVKKLGFIFMIVSASA. Residues 59–83 are disordered; it reads MNTKDYGNNSPSPRLERPPFKLIPN. The residue at position 64 (Y64) is a Sulfotyrosine. Residues P69 and P71 each carry the hydroxyproline modification.

Interacts with the specific receptor kinases GSO1 and GSO2. As to expression, expressed exclusively in the root stele.

In terms of biological role, peptide hormone required for contiguous Casparian strip diffusion barrier formation in roots via the regulation of CASPs protein expression and distribution in a GSO1-GSO2 signaling pathway. The Casparian strip is required for ion homeostasis (e.g. iron and potassium ions). The polypeptide is Protein CASPARIAN STRIP INTEGRITY FACTOR 1 (Arabidopsis thaliana (Mouse-ear cress)).